A 633-amino-acid polypeptide reads, in one-letter code: Threonine--tRNA ligase (633 aa).

Residues 1–61 enclose the TGS domain; that stretch reads MINITLPDGS…DHDASLRIIT (61 aa). The tract at residues 243 to 534 is catalytic; it reads DHRRIGKQQD…LIEHHAGQFP (292 aa). 3 residues coordinate Zn(2+): C334, H385, and H511.

This sequence belongs to the class-II aminoacyl-tRNA synthetase family. Homodimer. Zn(2+) is required as a cofactor.

It localises to the cytoplasm. It carries out the reaction tRNA(Thr) + L-threonine + ATP = L-threonyl-tRNA(Thr) + AMP + diphosphate + H(+). Catalyzes the attachment of threonine to tRNA(Thr) in a two-step reaction: L-threonine is first activated by ATP to form Thr-AMP and then transferred to the acceptor end of tRNA(Thr). Also edits incorrectly charged L-seryl-tRNA(Thr). This chain is Threonine--tRNA ligase, found in Stenotrophomonas maltophilia (strain R551-3).